Consider the following 143-residue polypeptide: MPMHFIFSDEAVLLFDFWRVHSPTGMALSVLVVLLLAVLYEGIKVGKAKLLHKTLESLPATNSQQFILGPDQDSTGSRSTSDNRTRLRWFLCYFGQSLVHVIQVVIGYFVMLAVMSYNTWIFLGVVLGSAVGYYLAYPLLNMT.

Topologically, residues 1–22 (MPMHFIFSDEAVLLFDFWRVHS) are extracellular. Residues 23–43 (PTGMALSVLVVLLLAVLYEGI) form a helical membrane-spanning segment. The Cytoplasmic portion of the chain corresponds to 44-93 (KVGKAKLLHKTLESLPATNSQQFILGPDQDSTGSRSTSDNRTRLRWFLCY). At Thr-75 the chain carries Phosphothreonine. Ser-77 bears the Phosphoserine mark. A helical membrane pass occupies residues 94–114 (FGQSLVHVIQVVIGYFVMLAV). Residues 115-119 (MSYNT) lie on the Extracellular side of the membrane. A helical transmembrane segment spans residues 120-140 (WIFLGVVLGSAVGYYLAYPLL). At 141–143 (NMT) the chain is on the cytoplasmic side.

The protein belongs to the copper transporter (Ctr) (TC 1.A.56) family. SLC31A subfamily. In terms of assembly, oligomer. Interacts with SLC31A1; this interaction stabilizes SLC31A2 and protects it from ubiquitination and the subsequent degradation. In terms of processing, ubiquitinated; ubiquitination and the subsequent proteasomal degradation are prevent by SLC31A1 that stabilizes it.

The protein resides in the membrane. The protein localises to the cytoplasmic vesicle membrane. It is found in the late endosome membrane. Its subcellular location is the lysosome membrane. It localises to the recycling endosome membrane. Does not function as a copper(1+) importer in vivo. However, in vitro functions as a low-affinity copper(1+) importer. Regulator of SLC31A1 which facilitates the cleavage of the SLC31A1 ecto-domain or which stabilizes the truncated form of SLC31A1 (Truncated CTR1 form), thereby drives the SLC31A1 truncated form-dependent endosomal copper export and modulates the copper and cisplatin accumulation via SLC31A1. This chain is Protein SLC31A2, found in Mus musculus (Mouse).